Here is a 286-residue protein sequence, read N- to C-terminus: MAVNILTLPAPAKLNLFLHIIGRRSDGYHNLQTVFQFLDYADTLKFYTAADDKFDLIDHDSHIPRDENLVWKALTALRKTYEEKGITQLPGCSIELIKRLPQGAGLGGGSSNAATALVGLNQLWGSHLNSTELQAIGRKLGADVPVFIHGHACFAEGIGDVFTNITPPTPWYLVVKPNVSISTAALFSHPKLERNCSPVTADNWQQQKVANVFEPVVCDLHTEVAMLRRALLEYAPTRLTGSGACLFSTFETRQAAKEAQQQVPKELCSFIAQGQNRSPLIQTLTQ.

Residue lysine 13 is part of the active site. An ATP-binding site is contributed by 101 to 111; that stretch reads PQGAGLGGGSS. Aspartate 143 is a catalytic residue.

The protein belongs to the GHMP kinase family. IspE subfamily.

It carries out the reaction 4-CDP-2-C-methyl-D-erythritol + ATP = 4-CDP-2-C-methyl-D-erythritol 2-phosphate + ADP + H(+). It functions in the pathway isoprenoid biosynthesis; isopentenyl diphosphate biosynthesis via DXP pathway; isopentenyl diphosphate from 1-deoxy-D-xylulose 5-phosphate: step 3/6. Its function is as follows. Catalyzes the phosphorylation of the position 2 hydroxy group of 4-diphosphocytidyl-2C-methyl-D-erythritol. The chain is 4-diphosphocytidyl-2-C-methyl-D-erythritol kinase from Idiomarina loihiensis (strain ATCC BAA-735 / DSM 15497 / L2-TR).